The chain runs to 469 residues: Secreted triacylglycerol lipase LIP3 (469 aa).

A signal peptide spans 1–21 (MVSLLWKFTLLCLFLLACTSA). A disulfide bridge connects residues Cys-121 and Cys-292. Ser-205 functions as the Nucleophile in the catalytic mechanism. Asn-238 is a glycosylation site (N-linked (GlcNAc...) asparagine). Residues Asp-352 and His-386 contribute to the active site.

It belongs to the AB hydrolase superfamily. Lipase family. Class Lip subfamily.

The protein localises to the secreted. It catalyses the reaction a triacylglycerol + H2O = a diacylglycerol + a fatty acid + H(+). The catalysed reaction is a monoacylglycerol + H2O = glycerol + a fatty acid + H(+). It carries out the reaction a diacylglycerol + H2O = a monoacylglycerol + a fatty acid + H(+). Functionally, secreted lipase that hydrolyzes acylglycerol lipids such as triacylglycerols and consequently releases free fatty acid. Generates free oleic acid from the substrates mono- and diolein and hydrolyzes triolein in significant amounts. Due to an absence of fatty acid synthase genes in Malassezia species, secretory lipases are essential for the yeast to generate free fatty acids from degradation of sebum and assimilate them as lipid sources for growth. Plays an essential role at the pathogen-host interface during disease progression. Performs also the reverse reaction to build diacyl- and triacyl- glycerols from monoacylglycerols. This is Secreted triacylglycerol lipase LIP3 from Malassezia restricta (strain ATCC 96810 / NBRC 103918 / CBS 7877) (Seborrheic dermatitis infection agent).